The chain runs to 154 residues: MVKAVAVIRGDSKVSGTVTFEQANENTPTTISWNITGHDANAERGFHVHQFGDNTNGCTSAGPHFNPFGKTHGAPEDDERHVGDLGNFKTDAEGNAVGSKQDKLVKLIGAESVLGRTLVVHAGTDDLGRGGNEESKKTGNAGPRPACGVIGIAA.

Cu cation-binding residues include H47, H49, and H64. C58 and C147 form a disulfide bridge. Positions 64, 72, 81, and 84 each coordinate Zn(2+). H121 provides a ligand contact to Cu cation. The span at 125–137 (DDLGRGGNEESKK) shows a compositional bias: basic and acidic residues. Positions 125 to 147 (DDLGRGGNEESKKTGNAGPRPAC) are disordered. Position 144 (R144) interacts with substrate.

It belongs to the Cu-Zn superoxide dismutase family. As to quaternary structure, homodimer. Cu cation serves as cofactor. It depends on Zn(2+) as a cofactor.

It localises to the cytoplasm. The enzyme catalyses 2 superoxide + 2 H(+) = H2O2 + O2. Its function is as follows. Destroys radicals which are normally produced within the cells and which are toxic to biological systems. This is Superoxide dismutase [Cu-Zn] from Aspergillus niger (strain ATCC MYA-4892 / CBS 513.88 / FGSC A1513).